We begin with the raw amino-acid sequence, 447 residues long: BAG family molecular chaperone regulator 5 (447 aa).

5 consecutive BAG domains span residues 9-86, 95-167, 182-260, 275-350, and 365-442; these read SISR…EQNA, QNIF…EDCM, SVAK…DLEE, SILK…DLKE, and SHKA…DLKS.

Binds to the ATPase domain of HSP/HSP70 chaperones. Binds PRKN. Interacts with HSPA8 and JPH2. As to expression, expressed in the heart.

In terms of biological role, co-chaperone for HSP/HSP70 proteins. It functions as a nucleotide-exchange factor promoting the release of ADP from HSP70, thereby activating HSP70-mediated protein refolding. Has an essential role in maintaining proteostasis at junctional membrane complexes (JMC), where it may function as a scaffold between the HSPA8 chaperone and JMC proteins enabling correct, HSPA8-dependent JMC protein folding. Inhibits both auto-ubiquitination of PRKN and ubiquitination of target proteins by PRKN. This chain is BAG family molecular chaperone regulator 5 (BAG5), found in Homo sapiens (Human).